We begin with the raw amino-acid sequence, 125 residues long: Alpha-endosulfine (125 aa).

Residues 1-37 show a composition bias toward basic and acidic residues; it reads MSDKYIGDSHLEETGEEKQDSQEKEAVTPEKAEEQKL. Positions 1-53 are disordered; that stretch reads MSDKYIGDSHLEETGEEKQDSQEKEAVTPEKAEEQKLKAKYPNLGQKPGGSDF. Thr28 bears the Phosphothreonine; by CDK2 mark. A Phosphoserine; by GWL modification is found at Ser67. Residues 81 to 108 are disordered; sequence QLPCAGPDKNLVTGDHIPTPQDLPQRKS. Position 99 is a phosphothreonine; by CDK2 (Thr99). At Ser109 the chain carries Phosphoserine; by PKA.

It belongs to the endosulfine family. Phosphorylation at Ser-67 by gwl during mitosis is essential for interaction with ppp2r2d (PR55-delta) and subsequent inactivation of PP2A.

The protein localises to the cytoplasm. In terms of biological role, protein phosphatase inhibitor that specifically inhibits protein phosphatase 2A (PP2A) during mitosis. When phosphorylated at Ser-67 during mitosis, specifically interacts with ppp2r2d (PR55-delta) and inhibits its activity, leading to inactivation of PP2A, an essential condition to keep cyclin-B1-CDK1 activity high during M phase. The polypeptide is Alpha-endosulfine (ensa) (Xenopus tropicalis (Western clawed frog)).